Here is a 286-residue protein sequence, read N- to C-terminus: uncharacterized protein (286 aa).

The Radical SAM core domain occupies 36–256 (ENPQHHPSIE…IKGCLLVQLK (221 aa)). [4Fe-4S] cluster contacts are provided by Cys-50, Cys-54, and Cys-57.

Requires [4Fe-4S] cluster as cofactor.

This is an uncharacterized protein from Methanocaldococcus jannaschii (strain ATCC 43067 / DSM 2661 / JAL-1 / JCM 10045 / NBRC 100440) (Methanococcus jannaschii).